Consider the following 3140-residue polypeptide: Genome polyprotein (3140 aa).

One can recognise a Peptidase S30 domain in the interval 165-308 (RMSEASLQLF…KEQSNEIIHY (144 aa)). Catalysis depends on for P1 proteinase activity residues H216, D225, and S259. The Involved in interaction with stylet and aphid transmission motif lies at 360–363 (KITC). The short motif at 618–620 (PTK) is the Involved in virions binding and aphid transmission element. The Peptidase C6 domain maps to 644 to 766 (MFIAKAGYCY…DSNMKTYLVG (123 aa)). Catalysis depends on for helper component proteinase activity residues C652 and H725. A Helicase ATP-binding domain is found at 1240-1392 (EVMHGSHQDI…TQKEVKVIVE (153 aa)). 1253–1260 (GAVGSGKS) is an ATP binding site. Residues 1342 to 1345 (DECH) carry the DECH box motif. The region spanning 1411–1570 (DILKHGVNVL…GLPVMTNGVS (160 aa)) is the Helicase C-terminal domain. The short motif at 1897–1904 (KKGKSKGK) is the Nuclear localization signal element. An O-(5'-phospho-RNA)-tyrosine modification is found at Y1919. The region spanning 2050–2268 (SKSLFRGLRD…VCWGSLQLKR (219 aa)) is the Peptidase C4 domain. Active-site for nuclear inclusion protein A activity residues include H2095, D2130, and C2200. The region spanning 2534-2658 (WIYCDADGSQ…AVHPAYESIY (125 aa)) is the RdRp catalytic domain. 2 O-linked (GlcNAc) threonine; by host glycosylation sites follow: T2829 and T2834. S2835 carries the post-translational modification Phosphoserine. T2851, T2863, T2864, and T2868 each carry an O-linked (GlcNAc) threonine; by host glycan. S2875 is a glycosylation site (O-linked (GlcNAc) serine; by host). Phosphoserine is present on residues S2891, S2911, and S2928. Phosphothreonine is present on residues T3064 and T3123.

It belongs to the potyviridae genome polyprotein family. As to quaternary structure, interacts with host eIF4E protein (via cap-binding region); this interaction mediates the translation of the VPg-viral RNA conjugates. Part of a complex that comprises VPg, RNA, host EIF4E and EIF4G; this interaction mediates the translation of the VPg-viral RNA conjugates. Post-translationally, VPg is uridylylated by the polymerase and is covalently attached to the 5'-end of the genomic RNA. This uridylylated form acts as a nucleotide-peptide primer for the polymerase. Genome polyprotein of potyviruses undergoes post-translational proteolytic processing by the main proteinase NIa-pro resulting in the production of at least ten individual proteins. The P1 proteinase and the HC-pro cleave only their respective C-termini autocatalytically. 6K1 is essential for proper proteolytic separation of P3 from CI.

It localises to the host cytoplasmic vesicle. Its subcellular location is the host nucleus. The protein localises to the virion. The catalysed reaction is RNA(n) + a ribonucleoside 5'-triphosphate = RNA(n+1) + diphosphate. It carries out the reaction Hydrolyzes glutaminyl bonds, and activity is further restricted by preferences for the amino acids in P6 - P1' that vary with the species of potyvirus, e.g. Glu-Xaa-Xaa-Tyr-Xaa-Gln-|-(Ser or Gly) for the enzyme from tobacco etch virus. The natural substrate is the viral polyprotein, but other proteins and oligopeptides containing the appropriate consensus sequence are also cleaved.. The enzyme catalyses Hydrolyzes a Gly-|-Gly bond at its own C-terminus, commonly in the sequence -Tyr-Xaa-Val-Gly-|-Gly, in the processing of the potyviral polyprotein.. Required for aphid transmission and also has proteolytic activity. Only cleaves a Gly-Gly dipeptide at its own C-terminus. Interacts with virions and aphid stylets. Acts as a suppressor of RNA-mediated gene silencing, also known as post-transcriptional gene silencing (PTGS), a mechanism of plant viral defense that limits the accumulation of viral RNAs. May have RNA-binding activity. Functionally, has helicase activity. It may be involved in replication. In terms of biological role, indispensable for virus replication. Reduces the abundance of host transcripts related to jasmonic acid biosynthesis therefore altering the host defenses. In order to increase its own stability, decreases host protein degradation pathways. Its function is as follows. Indispensable for virus replication. Mediates the cap-independent, EIF4E-dependent translation of viral genomic RNAs. Binds to the cap-binding site of host EIF4E and thus interferes with the host EIF4E-dependent mRNA export and translation. VPg-RNA directly binds EIF4E and is a template for transcription. Also forms trimeric complexes with EIF4E-EIF4G, which are templates for translation. Functionally, has RNA-binding and proteolytic activities. In terms of biological role, an RNA-dependent RNA polymerase that plays an essential role in the virus replication. Its function is as follows. Involved in aphid transmission, cell-to-cell and systemis movement, encapsidation of the viral RNA and in the regulation of viral RNA amplification. The chain is Genome polyprotein from Prunus armeniaca (Apricot).